A 205-amino-acid chain; its full sequence is GTP cyclohydrolase 1 (205 aa).

Residues C94, H97, and C165 each coordinate Zn(2+).

Belongs to the GTP cyclohydrolase I family. As to quaternary structure, homomer.

It carries out the reaction GTP + H2O = 7,8-dihydroneopterin 3'-triphosphate + formate + H(+). Its pathway is cofactor biosynthesis; 7,8-dihydroneopterin triphosphate biosynthesis; 7,8-dihydroneopterin triphosphate from GTP: step 1/1. The chain is GTP cyclohydrolase 1 from Sinorhizobium fredii (strain NBRC 101917 / NGR234).